The chain runs to 70 residues: Prokaryotic ubiquitin-like protein UBact (70 aa).

2 stretches are compositionally biased toward basic and acidic residues: residues 1–15 (MPDQ…RKQG) and 24–50 (TRHD…RDPG). Residues 1-70 (MPDQRQQERS…RQQRREQSGE (70 aa)) form a disordered region. Glu70 participates in a covalent cross-link: Isoglutamyl lysine isopeptide (Glu-Lys) (interchain with K-? in acceptor proteins).

Belongs to the ubiquitin-like protein UBact family.

May function as a protein modifier covalently attached to lysine residues of substrate proteins. This may serve to target the modified proteins for degradation by proteasomes. This Terrybacteria sp. (strain RIFCSPHIGHO2_01_FULL_58_15) protein is Prokaryotic ubiquitin-like protein UBact.